The following is a 629-amino-acid chain: Polyadenylate-binding protein 2 (629 aa).

Residues 1 to 12 show a composition bias toward polar residues; sequence MAQVQLQGQTPN. The interval 1–25 is disordered; the sequence is MAQVQLQGQTPNGSTAAVTSAPATS. The segment covering 13 to 25 has biased composition (low complexity); sequence GSTAAVTSAPATS. 4 RRM domains span residues 36-114, 124-201, 215-292, and 318-395; these read TSLY…YSHR, GNIF…PFLR, TNVY…RAQK, and SNLY…IAQR. Residues 480–507 form a disordered region; it reads PQQQRPGGGRRPGGIQHSQQQNPMMQQQ. A compositionally biased stretch (low complexity) spans 492–507; it reads GGIQHSQQQNPMMQQQ. In terms of domain architecture, PABC spans 539 to 616; it reads TIGALASNLS…AMDVLRSVAA (78 aa).

Belongs to the polyadenylate-binding protein type-1 family. As to quaternary structure, interacts with eIF-iso4G. Interacts with ERD15/CID1 and CID7. Interacts with Turnip mosaic virus (TuMV) VPg-Pro and RNA-dependent RNA polymerase (RdRp). Expressed in all organs (at the protein level) but under distinct spatial and temporal regulation within each organ.

It is found in the cytoplasm. Its subcellular location is the nucleus. Binds the poly(A) tail of mRNA. Appears to be an important mediator of the multiple roles of the poly(A) tail in mRNA biogenesis, stability and translation. In the cytoplasm, affects both translation and mRNA decay. Stimulates translation by interaction with translation initiation factor eIF4G, a subunit of the cap-binding complex eIF4F, bringing the 5'- and 3'-ends of the mRNA in proximity. The formation of this circular mRNP structure appears to be critical for the synergistic effects of the cap and the poly(A) tail in facilitating translation initiation, recycling of ribosomes, and mRNA stability. During infection with potyvirus TuMV, acts as a potential integral component of the viral replicase complex that could play an important role in the regulation of potyviral RNA-dependent RNA polymerase (RdRp). Binds to uridylated mRNAs and determines the size of uridine extensions. Limits uridine extension by URT1, likely by binding to the oligo(A) tail and preventing URT1 access. The sequence is that of Polyadenylate-binding protein 2 (PAB2) from Arabidopsis thaliana (Mouse-ear cress).